Consider the following 497-residue polypeptide: FAD-linked oxidoreductase fogF (497 aa).

An N-terminal signal peptide occupies residues 1 to 18 (MRRNILTALACSWLTAHA). Positions 59–229 (NAPTYAGAIS…TSATYKLHKL (171 aa)) constitute an FAD-binding PCMH-type domain.

This sequence belongs to the oxygen-dependent FAD-linked oxidoreductase family. The cofactor is FAD.

Its pathway is secondary metabolite biosynthesis. In terms of biological role, FAD-linked oxidoreductase; part of the gene cluster that mediates the biosynthesis of flavoglaucin and congeners (including aspergin, dihydroauroglaucin and auroglaucin), prenylated salicylaldehyde derivatives carrying a saturated or an unsaturated C-7 side chain. The PKS fogA releases the carboxylic acid (8E,10E,12E)-3,5,7-trihydroxytetradeca-8,10,12-trienoic acid as its product, as well as derivatives with one and two double bonds. FogA is indeed able to reduce the initial triketide, thus being at least partially responsible for the differently saturated heptyl side chains of flavoglaucin congeners. The oxidoreductases fogB, fogC and fogD modify the nascent polyketide in fogA-bound form and, together, fogA, fogB, fogC and fogD are necessary for the formation of the aromatic core and the cyclized PKS products are released as salicyl alcohols. In particular, fogB is responsible for oxidation of a hydroxyl group or reduction of remaining double bond(s) at the C-7 residue whereas fogD is probably involved in the reductive release of the modified PKS products. The cytochrome P450 monooxygenase fogE is then responsible for the hydroxylation at C-3 of the benzene ring. The fogE products are substrates of the prenyltransferase fogH and the prenylated benzyl alcohols are subsequently oxidized by the fogF to produce the final aryl aldehydes flavoglaucin and congeners. The short-chain dehydrogenase fogG does not seem to be involved in the biosynthesis of the prenylated salicylaldehyde derivatives. In Aspergillus ruber (strain CBS 135680), this protein is FAD-linked oxidoreductase fogF.